The following is a 788-amino-acid chain: MKDKSIKVLEFNKIQEILKNYTCTKAAKDIIEDLKPYDSMYEVREHLEETKEAFKLLITKGAPPFEGVYDIRSGISLAEKGSALLPGQLLKIAAVLRCARRFKEYINHKEEEESYRVLENICEGIFSLPKIEEEIFNAIEGEDEIADRASSTLYNIRRSLKEKNYSVRDKINSLVRSYSSYLQENIYTVRGDRYVLPVKAEHKGAVPGLVHDQSSTGATLFIEPMSLVNLNNEIKELMLKEKAEIERILTVLSAKINANITGVKTDANIVWELDFIFAKAKFASEYNCTCPTINDEGIVDIIEGRHPLIDRREVVPISVKLGEEFTSLMITGPNTGGKTVTLKTVGLIHLMAMSGLMIPARENSVISYFNNVFADIGDEQSIEQSLSTFSSHMKNIVEIMDKADENSLVLFDELGAGTDPTEGAALAISILENLRKRGTKIIATTHYSELKAYALRKEGVENASVEFDVETLRPTYRLLIGIPGKSNAFEISKRLGLPDYIIDFARENISNENIRFEELIQNLQEKSIKAQEDARLAENLKLERDKEKKKYEEKLEGLQKVRDNALIDARREAKNIIKEAKEEADKILKDIRQLERMGYSSDARRKLEEERKKLKDKLDSIEEKEIKTVHKGEALKNVKEGDEVLLASINQKVIVLSKPDNKGDVLVQAGIMKITANIKDLRAAKGSNSNNSSSKIKKSKKLNLNLRRVESSVDLRGMDAEEAIYTVDKYLDEAYLGGLGEVTIVHGKGTGVLRKTIMDMLKGHSHVKKYRLGEYGEGGTGVTVVELK.

An ATP-binding site is contributed by 332–339 (GPNTGGKT). In terms of domain architecture, Smr spans 713–788 (VDLRGMDAEE…GTGVTVVELK (76 aa)).

The protein belongs to the DNA mismatch repair MutS family. MutS2 subfamily. As to quaternary structure, homodimer. Binds to stalled ribosomes, contacting rRNA.

Its function is as follows. Endonuclease that is involved in the suppression of homologous recombination and thus may have a key role in the control of bacterial genetic diversity. Acts as a ribosome collision sensor, splitting the ribosome into its 2 subunits. Detects stalled/collided 70S ribosomes which it binds and splits by an ATP-hydrolysis driven conformational change. Acts upstream of the ribosome quality control system (RQC), a ribosome-associated complex that mediates the extraction of incompletely synthesized nascent chains from stalled ribosomes and their subsequent degradation. Probably generates substrates for RQC. The protein is Endonuclease MutS2 of Clostridium botulinum (strain ATCC 19397 / Type A).